Here is a 71-residue protein sequence, read N- to C-terminus: Phenoloxidase 3 (71 aa).

The Cu cation site is built by H3 and H29.

Belongs to the tyrosinase family. It depends on Cu(2+) as a cofactor. Upon activation, a trypsin type protease cleaves prophenol oxidase to yield the active enzyme. As to expression, hemocytes and plasma.

The protein localises to the secreted. The enzyme catalyses 2 L-dopa + O2 = 2 L-dopaquinone + 2 H2O. It carries out the reaction L-tyrosine + O2 = L-dopaquinone + H2O. Its function is as follows. This is a copper-containing oxidase that functions in the formation of pigments such as melanins and other polyphenolic compounds. Catalyzes the rate-limiting conversions of tyrosine to DOPA, DOPA to DOPA-quinone and possibly 5,6 dihydroxyindole to indole-5'6 quinone. This chain is Phenoloxidase 3, found in Sarcophaga argyrostoma (Flesh fly).